The chain runs to 2280 residues: Protein Ycf2 (2280 aa).

Position 1631–1638 (1631–1638 (GSIGTGRS)) interacts with ATP.

This sequence belongs to the Ycf2 family.

The protein resides in the plastid. The protein localises to the chloroplast stroma. Probable ATPase of unknown function. Its presence in a non-photosynthetic plant (Epifagus virginiana) and experiments in tobacco indicate that it has an essential function which is probably not related to photosynthesis. The sequence is that of Protein Ycf2 (ycf2-A) from Nicotiana tabacum (Common tobacco).